Here is a 633-residue protein sequence, read N- to C-terminus: NBPF family member NBPF3 (633 aa).

Positions 15-52 (RGPDVETSPFGAPRAASHGVGRHQELRDPTVPGPTSSA) are disordered. Residues 127-186 (LRDERLLTEEKLAEELGQAEELRQYKVLVHSQERELTQLREKLQEGRDASRSLNQHLQAL) adopt a coiled-coil conformation. Olduvai domains follow at residues 221 to 313 (ENDD…CIIP), 314 to 402 (ENES…ATSP), 405 to 460 (SREL…LDLD), 461 to 552 (RMKK…PPCP), and 555 to 633 (NEVL…IFPH). Basic and acidic residues predominate over residues 316–326 (ESDHEQEEEKG). The disordered stretch occupies residues 316–370 (ESDHEQEEEKGPVSPRNLQESEEEEAPQESWDEGDWTLSIPPDMSASYQSDRSTF). Over residues 335–350 (ESEEEEAPQESWDEGD) the composition is skewed to acidic residues. The segment at 463–484 (KKDQEEEEDQGPPCPRLSRELP) is disordered.

It belongs to the NBPF family. As to expression, expressed in testis and fetal heart, as well as in non small cell lung carcinoma and neuroblastoma cell line.

It localises to the cytoplasm. The polypeptide is NBPF family member NBPF3 (Homo sapiens (Human)).